Consider the following 367-residue polypeptide: Glycerol dehydrogenase (367 aa).

NAD(+)-binding residues include Asp-37, Gly-94, Lys-95, Thr-116, and Ser-119. Asp-121 serves as a coordination point for glycerol. NAD(+) is bound by residues Ser-125, Leu-127, and Tyr-131. Zn(2+)-binding residues include Asp-171, His-254, and His-271. His-254 contributes to the glycerol binding site.

This sequence belongs to the iron-containing alcohol dehydrogenase family. Zn(2+) is required as a cofactor.

It catalyses the reaction glycerol + NAD(+) = dihydroxyacetone + NADH + H(+). The protein operates within polyol metabolism; glycerol fermentation; glycerone phosphate from glycerol (oxidative route): step 1/2. Its function is as follows. Catalyzes the NAD-dependent oxidation of glycerol to dihydroxyacetone (glycerone). Allows microorganisms to utilize glycerol as a source of carbon under anaerobic conditions. This is Glycerol dehydrogenase (gldA) from Escherichia coli O6:H1 (strain CFT073 / ATCC 700928 / UPEC).